We begin with the raw amino-acid sequence, 517 residues long: Bifunctional purine biosynthesis protein PurH (517 aa).

The MGS-like domain occupies 1-151; sequence MTQERKIKRA…KNFAHVAVLC (151 aa).

This sequence belongs to the PurH family.

The catalysed reaction is (6R)-10-formyltetrahydrofolate + 5-amino-1-(5-phospho-beta-D-ribosyl)imidazole-4-carboxamide = 5-formamido-1-(5-phospho-D-ribosyl)imidazole-4-carboxamide + (6S)-5,6,7,8-tetrahydrofolate. It carries out the reaction IMP + H2O = 5-formamido-1-(5-phospho-D-ribosyl)imidazole-4-carboxamide. It functions in the pathway purine metabolism; IMP biosynthesis via de novo pathway; 5-formamido-1-(5-phospho-D-ribosyl)imidazole-4-carboxamide from 5-amino-1-(5-phospho-D-ribosyl)imidazole-4-carboxamide (10-formyl THF route): step 1/1. The protein operates within purine metabolism; IMP biosynthesis via de novo pathway; IMP from 5-formamido-1-(5-phospho-D-ribosyl)imidazole-4-carboxamide: step 1/1. The sequence is that of Bifunctional purine biosynthesis protein PurH from Elusimicrobium minutum (strain Pei191).